A 619-amino-acid polypeptide reads, in one-letter code: Lysophospholipid acyltransferase (619 aa).

Residues 1-19 (MYNPVDAVLTKIITNYGID) are Lumenal-facing. Residues 20 to 39 (SFTLRYAICLLGSFPLNAIL) form a helical membrane-spanning segment. The Cytoplasmic segment spans residues 40–51 (KRIPEKRIGLKC). Residues 52–72 (CFIISMSMFYLFGVLNLVSGF) form a helical membrane-spanning segment. At 73 to 92 (RTLFISTMFTYLISRFYRSK) the chain is on the lumenal side. Residues 93–113 (FMPHLNFMFVMGHLAINHIHA) form a helical membrane-spanning segment. Topologically, residues 114–231 (QFLNEQTQTT…GERRQIPKNG (118 aa)) are cytoplasmic. Catalysis depends on D146, which acts as the Nucleophile. Residues 232-252 (KLALWKVVQGLAWMILSTLGM) traverse the membrane as a helical segment. Residues 253–274 (KHFPVKYVLDKDGFPTRSFIFR) lie on the Lumenal side of the membrane. Residues 275-295 (IHYLFLLGFIHRFKYYAAWTI) traverse the membrane as a helical segment. Residues 296–429 (SEGSCILCGL…TPLPSKKIYD (134 aa)) lie on the Cytoplasmic side of the membrane. E297 (nucleophile) is an active-site residue. H382 is a catalytic residue. A helical transmembrane segment spans residues 430 to 450 (LVGIYAIKLAFGYMVQPFIIL). The Lumenal portion of the chain corresponds to 451–456 (DLKPSL). Residues 457–477 (MVWGSVYFYVHIIVAFSFFLF) form a helical membrane-spanning segment. At 478–619 (RGPYAKQVTE…SPKPISKKEE (142 aa)) the chain is on the cytoplasmic side. S513 is modified (phosphoserine). Positions 545–593 (ELEKWDNAKEDWEDFCKDYKEWRNKNGLEIEEENLSKAFERFKQEFSNA) form a coiled coil. The segment at 592-619 (NAASGSGERVRKMSFSGYSPKPISKKEE) is disordered. Residues S605, S610, and S615 each carry the phosphoserine modification.

It belongs to the membrane-bound acyltransferase family.

It is found in the endoplasmic reticulum membrane. It catalyses the reaction a 1-acyl-sn-glycero-3-phosphate + an acyl-CoA = a 1,2-diacyl-sn-glycero-3-phosphate + CoA. The enzyme catalyses a 1-acyl-sn-glycero-3-phosphocholine + an acyl-CoA = a 1,2-diacyl-sn-glycero-3-phosphocholine + CoA. It carries out the reaction 1-acyl-sn-glycero-3-phospho-(1'-sn-glycerol) + an acyl-CoA = a 1,2-diacyl-sn-glycero-3-phospho-(1'-sn-glycerol) + CoA. The catalysed reaction is a 1-acyl-sn-glycero-3-phospho-(1D-myo-inositol) + an acyl-CoA = a 1,2-diacyl-sn-glycero-3-phospho-(1D-myo-inositol) + CoA. It catalyses the reaction a 1-acyl-sn-glycero-3-phospho-L-serine + an acyl-CoA = a 1,2-diacyl-sn-glycero-3-phospho-L-serine + CoA. The enzyme catalyses a 1-acyl-sn-glycero-3-phosphoethanolamine + an acyl-CoA = a 1,2-diacyl-sn-glycero-3-phosphoethanolamine + CoA. It carries out the reaction 1-(9Z-octadecenoyl)-sn-glycero-3-phosphoethanolamine + (9Z)-octadecenoyl-CoA = 1,2-di-(9Z-octadecenoyl)-sn-glycero-3-phosphoethanolamine + CoA. The catalysed reaction is 1-(9Z-octadecenoyl)-sn-glycero-3-phosphoethanolamine + (9Z)-hexadecenoyl-CoA = 1-(9Z)-octadecenoyl-2-(9Z)-hexadecenoyl-sn-glycero-3-phosphoethanolamine + CoA. It catalyses the reaction 1-(9Z-octadecenoyl)-sn-glycero-3-phosphoethanolamine + hexadecanoyl-CoA = 1-(9Z-octadecenoyl)-2-hexadecanoyl-sn-glycero-3-phosphoethanolamine + CoA. The enzyme catalyses 1-(9Z-octadecenoyl)-sn-glycero-3-phosphoethanolamine + tetradecanoyl-CoA = 1-(9Z)-octadecenoyl-2-tetradecanoyl-sn-glycero-3-phosphoethanolamine + CoA. It carries out the reaction 1-(9Z-octadecenoyl)-sn-glycero-3-phosphate + (9Z)-octadecenoyl-CoA = 1,2-di-(9Z-octadecenoyl)-sn-glycero-3-phosphate + CoA. The catalysed reaction is (9Z)-hexadecenoyl-CoA + 1-hexadecanoyl-sn-glycero-3-phosphocholine = 1-hexadecanoyl-2-(9Z-hexadecenoyl)-sn-glycero-3-phosphocholine + CoA. It catalyses the reaction 1-hexadecanoyl-sn-glycero-3-phosphocholine + (9Z)-octadecenoyl-CoA = 1-hexadecanoyl-2-(9Z-octadecenoyl)-sn-glycero-3-phosphocholine + CoA. The enzyme catalyses 1-tetradecanoyl-sn-glycero-3-phosphoethanolamine + (9Z)-octadecenoyl-CoA = 1-tetradecanoyl-2-(9Z-octadecenoyl)-sn-glycero-3-phosphoethanolamine + CoA. It carries out the reaction 1-(9Z-octadecenoyl)-sn-glycero-3-phospho-L-serine + (9Z)-octadecenoyl-CoA = 1,2-di-(9Z)-octadecenoyl-sn-glycero-3-phospho-L-serine + CoA. The catalysed reaction is a 1-acyl-sn-glycero-3-phospho-(1D-myo-inositol) + (9Z)-octadecenoyl-CoA = a 1-acyl-2-(9Z-octadecenoyl)-sn-glycero-3-phospho-(1D-myo-inositol) + CoA. It participates in lipid metabolism; phospholipid metabolism. Broad specificity membrane-bound O-acyltransferase that mediates the incorporation of unsaturated acyl chains into the sn-2 position of various lysophospholipids. Preferentially acylates lysophosphocholine (LPC), but also lysophosphoethanolamine (LPE), lysophosphatidylglycerol (LPG), lysophosphatidic acid (LPA), lysophosphoethanolamine (LPE), lysophosphoinositol (LPI), and lysophosphoserine (LPS). Prefers an acyl residue to an alkyl residue at the sn-1 position of lysophospholipid acceptors. Accepts acyl chains in acyl-CoA from C-2 to C-20, and shows strong preference for unsaturated acyl-CoAs with 16-20 carbons. Together with SLC1, plays a central role in phosphatidic acid (PA) biosynthesis. PA is the intermediate, from which all glycerophospholipids are synthesized. Can also introduce an acyl chain at the sn-1 position of the lysophosphatidylcholine analog 1-hydroxy-2-hexadecyl-sn-glycero-3-phosphocholine (HHPC). This chain is Lysophospholipid acyltransferase, found in Saccharomyces cerevisiae (strain ATCC 204508 / S288c) (Baker's yeast).